A 588-amino-acid chain; its full sequence is Protein cereblon (588 aa).

2 disordered regions span residues 1 to 107 (MDDE…DDSD) and 159 to 197 (QERR…DIGF). Over residues 41-50 (AWNNATQDEQ) the composition is skewed to polar residues. The span at 75–85 (MVEDVLQDDTA) shows a compositional bias: acidic residues. The span at 86–96 (SEGSHPSSDMS) shows a compositional bias: polar residues. The segment covering 159-168 (QERRRSRTSE) has biased composition (basic and acidic residues). Over residues 181 to 192 (NDPPPQQPPRPP) the composition is skewed to pro residues. In terms of domain architecture, Lon N-terminal spans 228-454 (HMLIFLHQHI…LIKSTFKDES (227 aa)). The CULT domain occupies 453 to 562 (ESLFFCRYCN…LAGSSVRIGK (110 aa)). Residues Cys458, Cys461, Cys527, and Cys530 each contribute to the Zn(2+) site.

The protein belongs to the CRBN family. As to quaternary structure, likely a component of a DCX (DDB1-CUL4-X-box) protein ligase complex. May interact with pic/DDB1. In terms of processing, ubiquitinated.

The protein localises to the nucleus. It participates in protein modification; protein ubiquitination. In terms of biological role, substrate recognition component of a DCX (DDB1-CUL4-X-box) E3 protein ligase complex that mediates the ubiquitination and subsequent proteasomal degradation of target proteins. Has an essential role in mediating growth by negatively regulating insulin signaling. It also has a role in maintaining presynaptic function in the neuromuscular junction synapses of third-instar larvae. This is Protein cereblon from Drosophila yakuba (Fruit fly).